The primary structure comprises 186 residues: dCTP deaminase (186 aa).

A dCTP-binding site is contributed by 107–112 (KSTYAR). The active-site Proton donor/acceptor is Glu133. DCTP contacts are provided by Gln152, Tyr166, and Gln176.

The protein belongs to the dCTP deaminase family. Homotrimer.

The catalysed reaction is dCTP + H2O + H(+) = dUTP + NH4(+). Its pathway is pyrimidine metabolism; dUMP biosynthesis; dUMP from dCTP (dUTP route): step 1/2. Its function is as follows. Catalyzes the deamination of dCTP to dUTP. The chain is dCTP deaminase from Campylobacter concisus (strain 13826).